Consider the following 514-residue polypeptide: Protein nucleotidyltransferase YdiU (514 aa).

The ATP site is built by G90, G92, R93, K113, D125, G126, R176, and R183. D267 (proton acceptor) is an active-site residue. 2 residues coordinate Mg(2+): N268 and D277. D277 contacts ATP.

Belongs to the SELO family. The cofactor is Mg(2+). It depends on Mn(2+) as a cofactor.

It catalyses the reaction L-seryl-[protein] + ATP = 3-O-(5'-adenylyl)-L-seryl-[protein] + diphosphate. It carries out the reaction L-threonyl-[protein] + ATP = 3-O-(5'-adenylyl)-L-threonyl-[protein] + diphosphate. The catalysed reaction is L-tyrosyl-[protein] + ATP = O-(5'-adenylyl)-L-tyrosyl-[protein] + diphosphate. The enzyme catalyses L-histidyl-[protein] + UTP = N(tele)-(5'-uridylyl)-L-histidyl-[protein] + diphosphate. It catalyses the reaction L-seryl-[protein] + UTP = O-(5'-uridylyl)-L-seryl-[protein] + diphosphate. It carries out the reaction L-tyrosyl-[protein] + UTP = O-(5'-uridylyl)-L-tyrosyl-[protein] + diphosphate. Its function is as follows. Nucleotidyltransferase involved in the post-translational modification of proteins. It can catalyze the addition of adenosine monophosphate (AMP) or uridine monophosphate (UMP) to a protein, resulting in modifications known as AMPylation and UMPylation. The sequence is that of Protein nucleotidyltransferase YdiU from Photobacterium profundum (strain SS9).